Reading from the N-terminus, the 100-residue chain is Gas vesicle protein J (100 aa).

It belongs to the gas vesicle GvpA family. Interacts with GvpA.

The protein resides in the gas vesicle. Its function is as follows. A minor component of the gas vesicle, might be involved in nucleating gas vesicle formation. This protein could be important for the shape determination of the gas vesicle. Gas vesicles (GV) are hollow, gas filled proteinaceous nanostructures. During planktonic growth they allow positioning of the organism at a favorable depth for light or nutrient acquisition. When a minimal gvp locus (gvpA2-gvpR-gvpN-gvpF-gvpG-gvpL-gvpS-gvpK-gvpJ-gvpT-gvpU, called pNL29) is expressed in E.coli gas vesicles are made. The protein is Gas vesicle protein J of Priestia megaterium (Bacillus megaterium).